Here is a 349-residue protein sequence, read N- to C-terminus: Aldehyde reductase YahK (349 aa).

Residues Cys40, His62, Cys93, Cys96, Cys99, Cys107, and Cys158 each coordinate Zn(2+).

Belongs to the zinc-containing alcohol dehydrogenase family. The cofactor is Zn(2+).

The catalysed reaction is a primary alcohol + NADP(+) = an aldehyde + NADPH + H(+). Catalyzes the reduction of a wide range of aldehydes into their corresponding alcohols. Has a strong preference for NADPH over NADH as the electron donor. Cannot use a ketone as substrate. Is a major source of NADPH-dependent aldehyde reductase activity in E.coli. The in vivo functions of YahK has yet to be determined. The chain is Aldehyde reductase YahK (yahK) from Escherichia coli (strain K12).